The primary structure comprises 326 residues: DnaJ homolog subfamily B member 6 (326 aa).

Positions 2–69 constitute a J domain; the sequence is VDYYEVLGVQ…KKRDIYDKYG (68 aa). Positions 2–146 are interaction with HSP70; sequence VDYYEVLGVQ…TGSFFSAFSG (145 aa). An interaction with KRT18 region spans residues 119-242; that stretch reads FEDFFGNRRG…ADDDALAEER (124 aa). R135 is subject to Omega-N-methylarginine. Positions 249-326 are disordered; the sequence is ALPAQPAGLR…KKKKSTKGNH (78 aa). A Phosphoserine modification is found at S277.

Homooligomer. Interacts with BAG3, HSPB8 and STUB1. Interacts with ALKBH1. Interacts with HSP70, KRT18 and PTTG.

The protein resides in the cytoplasm. The protein localises to the perinuclear region. It localises to the nucleus. It is found in the myofibril. Its subcellular location is the sarcomere. The protein resides in the z line. Functionally, has a stimulatory effect on the ATPase activity of HSP70 in a dose-dependent and time-dependent manner and hence acts as a co-chaperone of HSP70. Plays an indispensable role in the organization of KRT8/KRT18 filaments. Acts as an endogenous molecular chaperone for neuronal proteins including huntingtin. Suppresses aggregation and toxicity of polyglutamine-containing, aggregation-prone proteins. Also reduces cellular toxicity and caspase-3 activity. This chain is DnaJ homolog subfamily B member 6 (DNAJB6), found in Pongo abelii (Sumatran orangutan).